The following is a 153-amino-acid chain: Ribosome maturation factor RimP (153 aa).

It belongs to the RimP family.

It localises to the cytoplasm. Required for maturation of 30S ribosomal subunits. The polypeptide is Ribosome maturation factor RimP (Rippkaea orientalis (strain PCC 8801 / RF-1) (Cyanothece sp. (strain PCC 8801))).